Consider the following 72-residue polypeptide: Translation initiation factor IF-1 (72 aa).

Positions 1–72 (MAKEDNIEMQ…SKGRIVFRSR (72 aa)) constitute an S1-like domain.

This sequence belongs to the IF-1 family. As to quaternary structure, component of the 30S ribosomal translation pre-initiation complex which assembles on the 30S ribosome in the order IF-2 and IF-3, IF-1 and N-formylmethionyl-tRNA(fMet); mRNA recruitment can occur at any time during PIC assembly.

The protein resides in the cytoplasm. Its function is as follows. One of the essential components for the initiation of protein synthesis. Stabilizes the binding of IF-2 and IF-3 on the 30S subunit to which N-formylmethionyl-tRNA(fMet) subsequently binds. Helps modulate mRNA selection, yielding the 30S pre-initiation complex (PIC). Upon addition of the 50S ribosomal subunit IF-1, IF-2 and IF-3 are released leaving the mature 70S translation initiation complex. The chain is Translation initiation factor IF-1 from Shewanella loihica (strain ATCC BAA-1088 / PV-4).